Reading from the N-terminus, the 314-residue chain is Acetyl-coenzyme A carboxylase carboxyl transferase subunit alpha (314 aa).

The region spanning 32-289 (EIDMLEASLE…KSAFVEQLDS (258 aa)) is the CoA carboxyltransferase C-terminal domain.

It belongs to the AccA family. Acetyl-CoA carboxylase is a heterohexamer composed of biotin carboxyl carrier protein (AccB), biotin carboxylase (AccC) and two subunits each of ACCase subunit alpha (AccA) and ACCase subunit beta (AccD).

Its subcellular location is the cytoplasm. It catalyses the reaction N(6)-carboxybiotinyl-L-lysyl-[protein] + acetyl-CoA = N(6)-biotinyl-L-lysyl-[protein] + malonyl-CoA. The protein operates within lipid metabolism; malonyl-CoA biosynthesis; malonyl-CoA from acetyl-CoA: step 1/1. Its function is as follows. Component of the acetyl coenzyme A carboxylase (ACC) complex. First, biotin carboxylase catalyzes the carboxylation of biotin on its carrier protein (BCCP) and then the CO(2) group is transferred by the carboxyltransferase to acetyl-CoA to form malonyl-CoA. In Staphylococcus aureus (strain bovine RF122 / ET3-1), this protein is Acetyl-coenzyme A carboxylase carboxyl transferase subunit alpha.